A 277-amino-acid polypeptide reads, in one-letter code: Hemin import ATP-binding protein HmuV (277 aa).

An ABC transporter domain is found at 25–260 (IHAQGLNLIL…DIIERVYGWP (236 aa)). Position 57–64 (57–64 (GPNGAGKS)) interacts with ATP.

Belongs to the ABC transporter superfamily. Heme (hemin) importer (TC 3.A.1.14.5) family. As to quaternary structure, the complex is composed of two ATP-binding proteins (HmuV), two transmembrane proteins (HmuU) and a solute-binding protein (HmuT).

It is found in the cell inner membrane. In terms of biological role, part of the ABC transporter complex HmuTUV involved in hemin import. Responsible for energy coupling to the transport system. In Photobacterium profundum (strain SS9), this protein is Hemin import ATP-binding protein HmuV.